Consider the following 361-residue polypeptide: tRNA/tmRNA (uracil-C(5))-methyltransferase (361 aa).

Residues Gln-183, Tyr-211, Asn-216, Glu-232, and Asp-294 each coordinate S-adenosyl-L-methionine. Cys-319 serves as the catalytic Nucleophile. The active-site Proton acceptor is Glu-353.

It belongs to the class I-like SAM-binding methyltransferase superfamily. RNA M5U methyltransferase family. TrmA subfamily.

It catalyses the reaction uridine(54) in tRNA + S-adenosyl-L-methionine = 5-methyluridine(54) in tRNA + S-adenosyl-L-homocysteine + H(+). The enzyme catalyses uridine(341) in tmRNA + S-adenosyl-L-methionine = 5-methyluridine(341) in tmRNA + S-adenosyl-L-homocysteine + H(+). Its function is as follows. Dual-specificity methyltransferase that catalyzes the formation of 5-methyluridine at position 54 (m5U54) in all tRNAs, and that of position 341 (m5U341) in tmRNA (transfer-mRNA). This Acinetobacter baumannii (strain AYE) protein is tRNA/tmRNA (uracil-C(5))-methyltransferase.